The following is a 334-amino-acid chain: Cytoskeleton protein RodZ (334 aa).

Residues 1-111 lie on the Cytoplasmic side of the membrane; sequence MNTEATHDQN…LGKRRKKRDG (111 aa). Residues 19 to 71 enclose the HTH cro/C1-type domain; sequence LRNAREQLGLSQQAVAERLCLKVSTVRDIEEDKAPSDLASTFLRGYIRSYARL. A DNA-binding region (H-T-H motif) is located at residues 30–49; it reads QQAVAERLCLKVSTVRDIEE. A helical; Signal-anchor for type II membrane protein membrane pass occupies residues 112–132; the sequence is WLMSFTWLVLFVVVGLTGAWW. Topologically, residues 133–334 are periplasmic; that stretch reads WQNHKAQQEE…TLNAEPTPAQ (202 aa). Residues 155 to 241 form a disordered region; that stretch reads NADKDSGQSV…PSALPTSQAG (87 aa). 2 stretches are compositionally biased toward low complexity: residues 170 to 211 and 219 to 241; these read AATS…TVVA and TAAT…SQAG.

The protein belongs to the RodZ family.

The protein localises to the cell inner membrane. Cytoskeletal protein that is involved in cell-shape control through regulation of the length of the long axis. The chain is Cytoskeleton protein RodZ from Salmonella agona (strain SL483).